The sequence spans 251 residues: NADPH-dependent oxidoreductase (251 aa).

Belongs to the flavin oxidoreductase frp family. It depends on FMN as a cofactor.

Functionally, reduces FMN, organic nitro compounds and disulfide DTNB. Involved in maintenance of the cellular redox state and the disulfide stress response. The sequence is that of NADPH-dependent oxidoreductase (nfrA) from Staphylococcus aureus (strain Mu50 / ATCC 700699).